Reading from the N-terminus, the 839-residue chain is Small conductance calcium-activated potassium channel protein 2 (839 aa).

Disordered stretches follow at residues 1–33 (MPIV…QESP), 64–115 (QRGF…QQPG), 195–258 (ALRQ…RRES), and 280–375 (SNLS…KKNQ). Composition is skewed to low complexity over residues 198-212 (QQYA…QYHQ) and 219-235 (ATSP…GPPL). Residues 236–253 (SHHHHHPHPAHHQHHQPQ) are compositionally biased toward basic residues. A compositionally biased stretch (low complexity) spans 313–326 (SSPSAAAAASSSAP). A compositionally biased stretch (gly residues) spans 345 to 363 (GTGGGGSTGGGGGGSGHGS). Residues 398–418 (ALIFGMFGIVVMVIETELSWG) traverse the membrane as a helical segment. Position 420 is a phosphotyrosine (Tyr-420). The helical transmembrane segment at 428 to 448 (LALKCLISLSTIILLGLIIVY) threads the bilayer. The chain crosses the membrane as a helical span at residues 474 to 494 (IFFICLEILVCAIHPIPGNYT). The chain crosses the membrane as a helical span at residues 516–536 (IILSIPMFLRLYLIARVMLLH). Residues 565-585 (LMTICPGTVLLVFSISLWIIA) form a helical membrane-spanning segment. Residues 605–625 (FLGAMWLISITFLSIGYGDMV) constitute an intramembrane region (pore-forming). A helical membrane pass occupies residues 634 to 654 (VCLLTGIMGAGCTALVVAVVA). Residues 672–748 (DTQLTKRVKN…LVDLAKTQNI (77 aa)) form a calmodulin-binding region. Residues 810–819 (HVSYNAERSR) are compositionally biased toward basic and acidic residues. The disordered stretch occupies residues 810–839 (HVSYNAERSRSSSRRRRSSSTAPPTSSESS). Residues 828 to 839 (SSTAPPTSSESS) show a composition bias toward low complexity.

The protein belongs to the potassium channel KCNN family. KCa2.2/KCNN2 subfamily. In terms of assembly, homodimer. Heteromultimer with KCNN1 and KCNN3. The complex is composed of 4 channel subunits each of which binds to a calmodulin subunit which regulates the channel activity through calcium-binding. Interacts (via N-terminal domain) with MPP2. Expressed in atrial and ventricular myocytes with higher levels in atrial myocytes (at protein level). Highly expressed in brain, liver and colon with low levels in kidney and testis. In colon, detected in smooth muscle cells.

The protein resides in the membrane. It localises to the cytoplasm. It is found in the myofibril. The protein localises to the sarcomere. Its subcellular location is the z line. The enzyme catalyses K(+)(in) = K(+)(out). With respect to regulation, inhibited by bee venom neurotoxin apamin. Inhibited by UCL 1684 and tetraethylammonium (TEA). In terms of biological role, small conductance calcium-activated potassium channel that mediates the voltage-independent transmembrane transfer of potassium across the cell membrane through a constitutive interaction with calmodulin which binds the intracellular calcium allowing its opening. The current is characterized by a voltage-independent activation, an intracellular calcium concentration increase-dependent activation and a single-channel conductance of about 3 picosiemens. Also presents an inwardly rectifying current, thus reducing its already small outward conductance of potassium ions, which is particularly the case when the membrane potential displays positive values, above + 20 mV. The inward rectification could be due to a blockade of the outward current by intracellular divalent cations such as calcium and magnesium and could also be due to an intrinsic property of the channel pore, independent of intracellular divalent ions. There are three positively charged amino acids in the S6 transmembrane domain, close to the pore, that collectively control the conductance and rectification through an electrostatic mechanism. Additionally, electrostatic contributions from these residues also play an important role in determining the intrinsic open probability of the channel in the absence of calcium, affecting the apparent calcium affinity for activation. Forms an heteromeric complex with calmodulin, which is constitutively associated in a calcium-independent manner. Channel opening is triggered when calcium binds the calmodulin resulting in a rotary movement leading to the formation of the dimeric complex to open the gate. Plays a role in the repolarization phase of cardiac action potential. The protein is Small conductance calcium-activated potassium channel protein 2 of Mus musculus (Mouse).